Reading from the N-terminus, the 174-residue chain is Crossover junction endodeoxyribonuclease RuvC (174 aa).

Active-site residues include Asp8, Glu67, and Asp139. Positions 8, 67, and 139 each coordinate Mg(2+).

Belongs to the RuvC family. In terms of assembly, homodimer which binds Holliday junction (HJ) DNA. The HJ becomes 2-fold symmetrical on binding to RuvC with unstacked arms; it has a different conformation from HJ DNA in complex with RuvA. In the full resolvosome a probable DNA-RuvA(4)-RuvB(12)-RuvC(2) complex forms which resolves the HJ. Mg(2+) serves as cofactor.

The protein resides in the cytoplasm. It catalyses the reaction Endonucleolytic cleavage at a junction such as a reciprocal single-stranded crossover between two homologous DNA duplexes (Holliday junction).. The RuvA-RuvB-RuvC complex processes Holliday junction (HJ) DNA during genetic recombination and DNA repair. Endonuclease that resolves HJ intermediates. Cleaves cruciform DNA by making single-stranded nicks across the HJ at symmetrical positions within the homologous arms, yielding a 5'-phosphate and a 3'-hydroxyl group; requires a central core of homology in the junction. The consensus cleavage sequence is 5'-(A/T)TT(C/G)-3'. Cleavage occurs on the 3'-side of the TT dinucleotide at the point of strand exchange. HJ branch migration catalyzed by RuvA-RuvB allows RuvC to scan DNA until it finds its consensus sequence, where it cleaves and resolves the cruciform DNA. This Ectopseudomonas mendocina (strain ymp) (Pseudomonas mendocina) protein is Crossover junction endodeoxyribonuclease RuvC.